The primary structure comprises 668 residues: Probable potassium transport system protein Kup (668 aa).

Transmembrane regions (helical) follow at residues 17–37 (GILV…LYVM), 59–79 (VSLI…VIAL), 104–124 (IIPA…TPAV), 148–168 (TIIV…QRFG), 175–195 (AFGP…LMNF), 221–241 (LGLF…ALYS), 256–276 (PYIK…LLTV), 299–319 (ILVF…QALI), 350–370 (MYIP…VLAF), 380–400 (YGLS…FYLL), 403–423 (IPAW…VVFF), and 430–450 (FFHG…IMII).

The protein belongs to the HAK/KUP transporter (TC 2.A.72) family.

Its subcellular location is the cell membrane. It catalyses the reaction K(+)(in) + H(+)(in) = K(+)(out) + H(+)(out). Functionally, transport of potassium into the cell. Likely operates as a K(+):H(+) symporter. The chain is Probable potassium transport system protein Kup from Enterococcus faecalis (strain ATCC 700802 / V583).